The following is a 424-amino-acid chain: Carbohydrate sulfotransferase 8 (424 aa).

The Cytoplasmic portion of the chain corresponds to 1 to 10 (MTLRPGTMRL). The chain crosses the membrane as a helical; Signal-anchor for type II membrane protein span at residues 11–31 (ACMFSSILLFGAAGLLLFISL). Residues 32 to 424 (QDPTELAPQQ…NYSKPFADLY (393 aa)) lie on the Lumenal side of the membrane. A disordered region spans residues 47-107 (FNIRPRQPHH…PLQRGTRLRL (61 aa)). Residues 66–77 (GDLKEPTERVTR) show a composition bias toward basic and acidic residues. Asparagine 128 carries N-linked (GlcNAc...) asparagine glycosylation. Residues 198–204 (PKAGCSN) and 258–266 (REPFERLVS) contribute to the 3'-phosphoadenylyl sulfate site. Asparagine 294, asparagine 367, and asparagine 415 each carry an N-linked (GlcNAc...) asparagine glycan.

This sequence belongs to the sulfotransferase 2 family. Predominantly expressed in pituitary gland. In brain, it is expressed in pituitary gland, cerebellum, medulla oblongata, pons, thalamus and spinal cord. Expressed in the epidermis. Expressed at lower level in lung, spleen, adrenal gland, placenta, prostate, testis, mammary gland and trachea.

It is found in the golgi apparatus membrane. Functionally, catalyzes the transfer of sulfate to position 4 of non-reducing N-acetylgalactosamine (GalNAc) residues in both N-glycans and O-glycans. Required for biosynthesis of glycoprotein hormones lutropin and thyrotropin, by mediating sulfation of their carbohydrate structures. Only active against terminal GalNAcbeta1,GalNAcbeta. Not active toward chondroitin. The chain is Carbohydrate sulfotransferase 8 (CHST8) from Homo sapiens (Human).